Here is a 262-residue protein sequence, read N- to C-terminus: Inactive snake venom serine proteinase 13 (262 aa).

The N-terminal stretch at methionine 1 to alanine 18 is a signal peptide. Residues glutamine 19–leucine 24 constitute a propeptide that is removed on maturation. The 226-residue stretch at valine 25–alanine 250 folds into the Peptidase S1 domain. 6 cysteine pairs are disulfide-bonded: cysteine 31–cysteine 162, cysteine 49–cysteine 65, cysteine 97–cysteine 257, cysteine 141–cysteine 211, cysteine 173–cysteine 190, and cysteine 201–cysteine 226. N-linked (GlcNAc...) asparagine glycans are attached at residues asparagine 78, asparagine 102, and asparagine 153.

It belongs to the peptidase S1 family. Snake venom subfamily. As to quaternary structure, monomer. Expressed by the venom gland.

The protein resides in the secreted. The chain is Inactive snake venom serine proteinase 13 from Crotalus adamanteus (Eastern diamondback rattlesnake).